We begin with the raw amino-acid sequence, 199 residues long: GTP cyclohydrolase-2 (199 aa).

Position 49-53 (49-53) interacts with GTP; that stretch reads RVHSE. Residues cysteine 54, cysteine 65, and cysteine 67 each contribute to the Zn(2+) site. Residues glutamine 70, 92-94, and threonine 114 contribute to the GTP site; that span reads EGR. Aspartate 126 acts as the Proton acceptor in catalysis. Arginine 128 acts as the Nucleophile in catalysis. GTP contacts are provided by threonine 149 and lysine 154.

This sequence belongs to the GTP cyclohydrolase II family. Zn(2+) is required as a cofactor.

It catalyses the reaction GTP + 4 H2O = 2,5-diamino-6-hydroxy-4-(5-phosphoribosylamino)-pyrimidine + formate + 2 phosphate + 3 H(+). It participates in cofactor biosynthesis; riboflavin biosynthesis; 5-amino-6-(D-ribitylamino)uracil from GTP: step 1/4. Catalyzes the conversion of GTP to 2,5-diamino-6-ribosylamino-4(3H)-pyrimidinone 5'-phosphate (DARP), formate and pyrophosphate. In Baumannia cicadellinicola subsp. Homalodisca coagulata, this protein is GTP cyclohydrolase-2.